Consider the following 644-residue polypeptide: DNA mismatch repair protein MutL (644 aa).

Positions 336–400 (ERPFEPSSPQ…EISRDSSLGE (65 aa)) are disordered. Residues 373–400 (SKTHSTWDEASRVDTSRAEISRDSSLGE) are compositionally biased toward basic and acidic residues.

The protein belongs to the DNA mismatch repair MutL/HexB family.

Its function is as follows. This protein is involved in the repair of mismatches in DNA. It is required for dam-dependent methyl-directed DNA mismatch repair. May act as a 'molecular matchmaker', a protein that promotes the formation of a stable complex between two or more DNA-binding proteins in an ATP-dependent manner without itself being part of a final effector complex. In Shewanella sp. (strain MR-7), this protein is DNA mismatch repair protein MutL.